Consider the following 198-residue polypeptide: 7-methyl-GTP pyrophosphatase (198 aa).

The Proton acceptor role is filled by aspartate 69.

This sequence belongs to the Maf family. YceF subfamily. Requires a divalent metal cation as cofactor.

It is found in the cytoplasm. It carries out the reaction N(7)-methyl-GTP + H2O = N(7)-methyl-GMP + diphosphate + H(+). In terms of biological role, nucleoside triphosphate pyrophosphatase that hydrolyzes 7-methyl-GTP (m(7)GTP). May have a dual role in cell division arrest and in preventing the incorporation of modified nucleotides into cellular nucleic acids. The polypeptide is 7-methyl-GTP pyrophosphatase (Yersinia pseudotuberculosis serotype I (strain IP32953)).